A 277-amino-acid chain; its full sequence is Uridine-cytidine kinase 1 (277 aa).

Positions 1 to 30 are disordered; that stretch reads MASAGGEDCESPAPEADRPHQRPFLIGVSG. Residue 30–38 participates in ATP binding; it reads GGTASGKST. Aspartate 65 is an active-site residue. The substrate site is built by aspartate 87, tyrosine 115, histidine 120, arginine 169, arginine 178, and glutamine 186. An ATP-binding site is contributed by aspartate 215. Residues 247-277 form a disordered region; it reads SYKRTFSEPGDHPGMLTSGKRSHLESSSRPH. Position 251 is a phosphothreonine (threonine 251). Serine 253 is subject to Phosphoserine. A compositionally biased stretch (basic and acidic residues) spans 268–277; that stretch reads SHLESSSRPH.

Belongs to the uridine kinase family. As to expression, ubiquitous.

It catalyses the reaction uridine + ATP = UMP + ADP + H(+). It carries out the reaction cytidine + ATP = CMP + ADP + H(+). It functions in the pathway pyrimidine metabolism; CTP biosynthesis via salvage pathway; CTP from cytidine: step 1/3. Its pathway is pyrimidine metabolism; UMP biosynthesis via salvage pathway; UMP from uridine: step 1/1. Functionally, phosphorylates uridine and cytidine to uridine monophosphate and cytidine monophosphate. Does not phosphorylate deoxyribonucleosides or purine ribonucleosides. Can use ATP or GTP as a phosphate donor. Can also phosphorylate cytidine and uridine nucleoside analogs such as 6-azauridine, 5-fluorouridine, 4-thiouridine, 5-bromouridine, N(4)-acetylcytidine, N(4)-benzoylcytidine, 5-fluorocytidine, 2-thiocytidine, 5-methylcytidine, and N(4)-anisoylcytidine. This is Uridine-cytidine kinase 1 (UCK1) from Homo sapiens (Human).